The sequence spans 104 residues: Flagellar hook-basal body complex protein FliE (104 aa).

The protein belongs to the FliE family.

It is found in the bacterial flagellum basal body. In Salmonella typhi, this protein is Flagellar hook-basal body complex protein FliE.